Consider the following 254-residue polypeptide: Bax inhibitor 1 homolog (254 aa).

At methionine 1 to valine 43 the chain is on the cytoplasmic side. The helical transmembrane segment at tyrosine 44–isoleucine 64 threads the bilayer. The Lumenal portion of the chain corresponds to tyrosine 65–arginine 66. A helical transmembrane segment spans residues proline 67–proline 87. The Cytoplasmic portion of the chain corresponds to arginine 88–arginine 98. The chain crosses the membrane as a helical span at residues phenylalanine 99 to leucine 119. Topologically, residues tyrosine 120–serine 126 are lumenal. A helical transmembrane segment spans residues isoleucine 127–leucine 147. Over leucine 148–arginine 152 the chain is Cytoplasmic. Residues leucine 153 to leucine 173 form a helical membrane-spanning segment. Residues threonine 174–leucine 187 are Lumenal-facing. The chain crosses the membrane as a helical span at residues phenylalanine 188–valine 208. The Cytoplasmic segment spans residues histidine 209–lysine 217. Positions aspartate 218–leucine 238 form an intramembrane region, helical. Residues lysine 239–arginine 254 lie on the Cytoplasmic side of the membrane.

The protein belongs to the BI1 family.

The protein localises to the endoplasmic reticulum membrane. This Dictyostelium discoideum (Social amoeba) protein is Bax inhibitor 1 homolog.